A 129-amino-acid polypeptide reads, in one-letter code: Glycine cleavage system H protein (129 aa).

One can recognise a Lipoyl-binding domain in the interval 24–106 (LIRVGISAFA…HGAGWLLVVR (83 aa)). Lys-65 bears the N6-lipoyllysine mark.

The protein belongs to the GcvH family. The glycine cleavage system is composed of four proteins: P, T, L and H. It depends on (R)-lipoate as a cofactor.

Functionally, the glycine cleavage system catalyzes the degradation of glycine. The H protein shuttles the methylamine group of glycine from the P protein to the T protein. The sequence is that of Glycine cleavage system H protein from Synechococcus sp. (strain CC9902).